The sequence spans 338 residues: MNIYYDKDCDLSLIQGMRVAIIGYGSQGHAHANNLKDSGVDVVVGLRSGSTSVAKAENAGLTVLPIEAAIKEADLAMILAPDEHQSKLYQEDIEPHLKQNATLAFAHGFNIHFRQIEPRADLDVIMVAPKGPGHLVRSTYTQGGGVPSLIAVHQDVSTKAREIALSYAAANGGGRAGIIETAFREETETDLFGEQVVLCGGVTALVQAGFETLVEAGYAPEMAYFECLHELKLIVDLMYEGGIANMRYSISNTAEYGDFTRGPRIIDDKTKTEMRRILSEIQSGEFAREFILENQAGAPTLKAKRRLGQEHLIEQVGERLRSMMPWIGKSRIVDKSKN.

A KARI N-terminal Rossmann domain is found at 1–181 (MNIYYDKDCD…GGGRAGIIET (181 aa)). NADP(+)-binding positions include 24–27 (YGSQ), arginine 47, serine 50, serine 52, and 82–85 (DEHQ). The active site involves histidine 107. Glycine 133 lines the NADP(+) pocket. The 146-residue stretch at 182–327 (AFREETETDL…ERLRSMMPWI (146 aa)) folds into the KARI C-terminal knotted domain. Residues aspartate 190, glutamate 194, glutamate 226, and glutamate 230 each contribute to the Mg(2+) site. Serine 251 contacts substrate.

This sequence belongs to the ketol-acid reductoisomerase family. The cofactor is Mg(2+).

The enzyme catalyses (2R)-2,3-dihydroxy-3-methylbutanoate + NADP(+) = (2S)-2-acetolactate + NADPH + H(+). The catalysed reaction is (2R,3R)-2,3-dihydroxy-3-methylpentanoate + NADP(+) = (S)-2-ethyl-2-hydroxy-3-oxobutanoate + NADPH + H(+). The protein operates within amino-acid biosynthesis; L-isoleucine biosynthesis; L-isoleucine from 2-oxobutanoate: step 2/4. Its pathway is amino-acid biosynthesis; L-valine biosynthesis; L-valine from pyruvate: step 2/4. Functionally, involved in the biosynthesis of branched-chain amino acids (BCAA). Catalyzes an alkyl-migration followed by a ketol-acid reduction of (S)-2-acetolactate (S2AL) to yield (R)-2,3-dihydroxy-isovalerate. In the isomerase reaction, S2AL is rearranged via a Mg-dependent methyl migration to produce 3-hydroxy-3-methyl-2-ketobutyrate (HMKB). In the reductase reaction, this 2-ketoacid undergoes a metal-dependent reduction by NADPH to yield (R)-2,3-dihydroxy-isovalerate. The chain is Ketol-acid reductoisomerase (NADP(+)) from Nitrosococcus oceani (strain ATCC 19707 / BCRC 17464 / JCM 30415 / NCIMB 11848 / C-107).